We begin with the raw amino-acid sequence, 428 residues long: Nucleotidyltransferase MB21D2 (428 aa).

The disordered stretch occupies residues 366-389; sequence QRRGSTTSIPSPQSDGGDPNQPDD. Residues 368 to 379 show a composition bias toward polar residues; it reads RGSTTSIPSPQS. A Phosphothreonine modification is found at Thr-372. A phosphoserine mark is found at Ser-373, Ser-376, and Ser-379.

The protein belongs to the mab-21 family.

Its function is as follows. Probable nucleotidyltransferase that catalyzes the formation of cyclic dinucleotide second messenger in response to some unknown stimulus. This is Nucleotidyltransferase MB21D2 from Mus musculus (Mouse).